A 310-amino-acid polypeptide reads, in one-letter code: Protoheme IX farnesyltransferase (310 aa).

The next 9 membrane-spanning stretches (helical) occupy residues Val30–Ala47, Gly50–Gly70, Leu102–Leu122, Trp126–Leu146, Ile152–Ile172, Val181–Leu201, Ile228–Ala248, Ile251–Phe271, and Ala286–Leu306.

Belongs to the UbiA prenyltransferase family. Protoheme IX farnesyltransferase subfamily.

It is found in the cell inner membrane. The enzyme catalyses heme b + (2E,6E)-farnesyl diphosphate + H2O = Fe(II)-heme o + diphosphate. Its pathway is porphyrin-containing compound metabolism; heme O biosynthesis; heme O from protoheme: step 1/1. Converts heme B (protoheme IX) to heme O by substitution of the vinyl group on carbon 2 of heme B porphyrin ring with a hydroxyethyl farnesyl side group. In Koribacter versatilis (strain Ellin345), this protein is Protoheme IX farnesyltransferase.